We begin with the raw amino-acid sequence, 102 residues long: Hypersensitivity to hygromycin-B protein 1 (102 aa).

A signal peptide spans 1–17 (MSLSFLLFSPFLPPCFS). The chain crosses the membrane as a helical span at residues 18–38 (SISICLSVLSTVSFFFAFTIP). Residues 39-69 (HYVLRCGSVDEWHIHSSAEDFRTQRCVCAVK) are Cytoplasmic-facing. Residues 70 to 90 (LSASLLGCLLACASWSLLLEV) form a helical membrane-spanning segment. Residues 91–102 (SRIKWHVGTAYS) lie on the Extracellular side of the membrane.

The protein localises to the membrane. Involved in vacuolar trafficking. The sequence is that of Hypersensitivity to hygromycin-B protein 1 from Saccharomyces cerevisiae (strain ATCC 204508 / S288c) (Baker's yeast).